A 445-amino-acid polypeptide reads, in one-letter code: 23S rRNA (uracil(1939)-C(5))-methyltransferase RlmD (445 aa).

In terms of domain architecture, TRAM spans 12–70; the sequence is SKQLSSKLSLKVTQLDHLGAGIAHHDGKIVFINGALPGETVSVQLTEQKKKFARAKLLK. Positions 83, 89, 92, and 171 each coordinate [4Fe-4S] cluster. S-adenosyl-L-methionine contacts are provided by glutamine 278, phenylalanine 307, asparagine 312, glutamate 328, aspartate 355, and aspartate 375. The active-site Nucleophile is cysteine 401.

It belongs to the class I-like SAM-binding methyltransferase superfamily. RNA M5U methyltransferase family. RlmD subfamily.

The catalysed reaction is uridine(1939) in 23S rRNA + S-adenosyl-L-methionine = 5-methyluridine(1939) in 23S rRNA + S-adenosyl-L-homocysteine + H(+). In terms of biological role, catalyzes the formation of 5-methyl-uridine at position 1939 (m5U1939) in 23S rRNA. In Shewanella halifaxensis (strain HAW-EB4), this protein is 23S rRNA (uracil(1939)-C(5))-methyltransferase RlmD.